An 88-amino-acid polypeptide reads, in one-letter code: Cell division topological specificity factor (88 aa).

The protein belongs to the MinE family.

Prevents the cell division inhibition by proteins MinC and MinD at internal division sites while permitting inhibition at polar sites. This ensures cell division at the proper site by restricting the formation of a division septum at the midpoint of the long axis of the cell. The protein is Cell division topological specificity factor of Shewanella denitrificans (strain OS217 / ATCC BAA-1090 / DSM 15013).